We begin with the raw amino-acid sequence, 156 residues long: Cell division protein SepF (156 aa).

Over residues 20 to 36 (AQYGYEKEQTDMKKQQD) the composition is skewed to basic and acidic residues. Residues 20–50 (AQYGYEKEQTDMKKQQDPPEQQDVTFPKAQP) form a disordered region.

It belongs to the SepF family. Homodimer. Interacts with FtsZ.

It localises to the cytoplasm. Its function is as follows. Cell division protein that is part of the divisome complex and is recruited early to the Z-ring. Probably stimulates Z-ring formation, perhaps through the cross-linking of FtsZ protofilaments. Its function overlaps with FtsA. This is Cell division protein SepF from Bacillus cereus (strain G9842).